Here is a 245-residue protein sequence, read N- to C-terminus: 14-3-3 protein zeta/delta (245 aa).

Met-1 is modified (N-acetylmethionine). At Lys-3 the chain carries N6-acetyllysine. Ser-58 is subject to Phosphoserine; by PKA. Lys-68 is modified (N6-acetyllysine). Phosphoserine occurs at positions 184, 207, and 210. Thr-232 bears the Phosphothreonine; by CK1 mark.

The protein belongs to the 14-3-3 family. As to quaternary structure, interacts with CDK16 and BSPRY. Interacts with WEE1 (C-terminal). Interacts with SAMSN1. Interacts with MLF1 (phosphorylated form); the interaction retains it in the cytoplasm. Interacts with Thr-phosphorylated ITGB2. Interacts with BCL2L11. Homodimer. Heterodimerizes with YWHAE. Homo- and heterodimerization is inhibited by phosphorylation on Ser-58. Interacts with FOXO4, NOXA1, SSH1 and ARHGEF2. Interacts with Pseudomonas aeruginosa exoS (unphosphorylated form). Interacts with BAX; the interaction occurs in the cytoplasm. Under stress conditions, MAPK8-mediated phosphorylation releases BAX to mitochondria. Interacts with phosphorylated RAF1; the interaction is inhibited when YWHAZ is phosphorylated on Thr-232. Interacts with TP53; the interaction enhances p53 transcriptional activity. The Ser-58 phosphorylated form inhibits this interaction and p53 transcriptional activity. Interacts with ABL1 (phosphorylated form); the interaction retains ABL1 in the cytoplasm. Interacts with PKA-phosphorylated AANAT; the interaction modulates AANAT enzymatic activity by increasing affinity for arylalkylamines and acetyl-CoA and protecting the enzyme from dephosphorylation and proteasomal degradation. It may also prevent thiol-dependent inactivation. Interacts with AKT1; the interaction phosphorylates YWHAZ and modulates dimerization. Interacts with GAB2 and TLK2. Interacts with the 'Thr-369' phosphorylated form of DAPK2. Interacts with PI4KB, TBC1D22A and TBC1D22B. Interacts with ZFP36L1 (via phosphorylated form); this interaction occurs in a p38 MAPK- and AKT-signaling pathways. Interacts with SLITRK1. Interacts with AK5, LDB1, MADD, MARK3, PDE1A and SMARCB1. Interacts with YWHAZ. Interacts with MEFV. Interacts with ADAM22 (via C-terminus). The delta, brain-specific form differs from the zeta form in being phosphorylated. Phosphorylation on Ser-184 by MAPK8; promotes dissociation of BAX and translocation of BAX to mitochondria. Phosphorylation on Thr-232; inhibits binding of RAF1. Phosphorylated on Ser-58 by PKA and protein kinase C delta type catalytic subunit in a sphingosine-dependent fashion. Phosphorylation on Ser-58 by PKA; disrupts homodimerization and heterodimerization with YHAE and TP53. Highly expressed in brain (at protein level).

It localises to the cytoplasm. Its subcellular location is the melanosome. Functionally, adapter protein implicated in the regulation of a large spectrum of both general and specialized signaling pathways. Binds to a large number of partners, usually by recognition of a phosphoserine or phosphothreonine motif. Binding generally results in the modulation of the activity of the binding partner. Promotes cytosolic retention and inactivation of TFEB transcription factor by binding to phosphorylated TFEB. Induces ARHGEF7 activity on RAC1 as well as lamellipodia and membrane ruffle formation. In neurons, regulates spine maturation through the modulation of ARHGEF7 activity. This chain is 14-3-3 protein zeta/delta (YWHAZ), found in Ovis aries (Sheep).